The chain runs to 113 residues: Endoribonuclease SymE (113 aa).

Residues 29–74 (SRYPDYSRIPAITLKGQWLEAAGFATGTAVDVKVMEGCIVLTAQPP) form the SpoVT-AbrB domain.

The protein belongs to the SymE family.

The protein resides in the cytoplasm. In terms of biological role, involved in the degradation and recycling of damaged RNA. It is itself a target for degradation by the ATP-dependent protease Lon. The sequence is that of Endoribonuclease SymE from Escherichia coli (strain K12 / MC4100 / BW2952).